Consider the following 341-residue polypeptide: Serpentine receptor class alpha-28 (341 aa).

7 consecutive transmembrane segments (helical) span residues 25–45, 57–77, 107–129, 142–162, 188–208, 242–262, and 275–295; these read FIIS…RVLL, LLFS…VIRL, YYYT…LFSF, ASIV…YWVF, VNNI…FLYI, IVIF…SVFI, and LIIS…LIIL.

Belongs to the nematode receptor-like protein sra family.

The protein resides in the membrane. In Caenorhabditis elegans, this protein is Serpentine receptor class alpha-28 (sra-28).